Consider the following 419-residue polypeptide: Acyl-coenzyme A thioesterase 1 (419 aa).

Active-site charge relay system residues include serine 232, aspartate 324, and histidine 358. A Phosphoserine modification is found at serine 416.

The protein belongs to the C/M/P thioester hydrolase family. Monomer. In terms of tissue distribution, expressed in heart, kidney, brown adipose tissue, white adipose tissue, adrenal gland and muscle.

The protein localises to the cytoplasm. Its subcellular location is the cytosol. It catalyses the reaction hexadecanoyl-CoA + H2O = hexadecanoate + CoA + H(+). The catalysed reaction is decanoyl-CoA + H2O = decanoate + CoA + H(+). The enzyme catalyses dodecanoyl-CoA + H2O = dodecanoate + CoA + H(+). It carries out the reaction tetradecanoyl-CoA + H2O = tetradecanoate + CoA + H(+). It catalyses the reaction octadecanoyl-CoA + H2O = octadecanoate + CoA + H(+). The catalysed reaction is eicosanoyl-CoA + H2O = eicosanoate + CoA + H(+). The enzyme catalyses (9Z)-octadecenoyl-CoA + H2O = (9Z)-octadecenoate + CoA + H(+). It carries out the reaction (9Z)-hexadecenoyl-CoA + H2O = (9Z)-hexadecenoate + CoA + H(+). It catalyses the reaction (9E)-octadecenoyl-CoA + H2O = (9E)-octadecenoate + CoA + H(+). The protein operates within lipid metabolism; fatty acid metabolism. Functionally, catalyzes the hydrolysis of acyl-CoAs into free fatty acids and coenzyme A (CoASH), regulating their respective intracellular levels. More active towards saturated and unsaturated long chain fatty acyl-CoAs (C12-C20). This is Acyl-coenzyme A thioesterase 1 (Acot1) from Mus musculus (Mouse).